The following is a 791-amino-acid chain: RAS guanyl-releasing protein 1 (791 aa).

Residues 49-172 (LGKLSKGASL…RLIDTAQINS (124 aa)) enclose the N-terminal Ras-GEF domain. Positions 53 to 106 (SKGASLDELIQMCIQAFDLDGNMGQNNELLQIMLTMHGFLIPSTELLIKLRTLY) are ras exchanger motif region; required for transforming activity. The Ras-GEF domain maps to 201–432 (EPQELAEHLT…YELSYAREPR (232 aa)). EF-hand domains are found at residues 466-501 (HVQRMVDSVFKNYDLDQDGYISQEEFEKIAASFPFS) and 502-528 (FCVMDKDREGLISRQEITAYFMRASSI). Ca(2+) is bound by residues D479, D481, D483, Y485, E490, D506, D508, E510, and E517. The segment at 537-587 (LHNFQETTYLRPTFCDNCAGFLWGVIKQGYRCKDCGMNCHKQCKELVVFEC) adopts a Phorbol-ester/DAG-type zinc-finger fold. The segment at 671–715 (TQTENETQSLCLQVPSPPRSRTPDLTSHLPISPMPSPCPSPVPTR) is disordered. Polar residues predominate over residues 672 to 681 (QTENETQSLC). The span at 702–712 (SPMPSPCPSPV) shows a compositional bias: pro residues. Residues 728–783 (IRKARAELRGGKAGIQELEKEKVFLKEENTALKIQLKDAHRRVETLRAELRKYVLD) adopt a coiled-coil conformation.

The protein belongs to the RASGRP family.

The protein localises to the cytoplasm. The protein resides in the cytosol. It localises to the cell membrane. It is found in the golgi apparatus membrane. Its subcellular location is the endoplasmic reticulum membrane. Regulated by F-actin polymerization and probably by calcium. Its function is as follows. Functions as a diacylglycerol (DAG)-regulated nucleotide exchange factor specifically activating Ras through the exchange of bound GDP for GTP. The chain is RAS guanyl-releasing protein 1 (rasgrp1) from Xenopus laevis (African clawed frog).